The following is a 294-amino-acid chain: Urease accessory protein UreD 1 (294 aa).

The interval 1–20 is disordered; that stretch reads MALSLDDLPEKPAPAEPVSA.

Belongs to the UreD family. UreD, UreF and UreG form a complex that acts as a GTP-hydrolysis-dependent molecular chaperone, activating the urease apoprotein by helping to assemble the nickel containing metallocenter of UreC. The UreE protein probably delivers the nickel.

Its subcellular location is the cytoplasm. Functionally, required for maturation of urease via the functional incorporation of the urease nickel metallocenter. The chain is Urease accessory protein UreD 1 from Methylorubrum populi (strain ATCC BAA-705 / NCIMB 13946 / BJ001) (Methylobacterium populi).